Reading from the N-terminus, the 155-residue chain is DNA gyrase inhibitor (155 aa).

It belongs to the DNA gyrase inhibitor family. As to quaternary structure, interacts with DNA gyrase.

It is found in the cytoplasm. Its function is as follows. Inhibits the supercoiling activity of DNA gyrase. Acts by inhibiting DNA gyrase at an early step, prior to (or at the step of) binding of DNA by the gyrase. It protects cells against toxins that target DNA gyrase, by inhibiting activity of these toxins and reducing the formation of lethal double-strand breaks in the cell. In Edwardsiella ictaluri (strain 93-146), this protein is DNA gyrase inhibitor.